The following is a 382-amino-acid chain: Anhydro-N-acetylmuramic acid kinase (382 aa).

Residue 22 to 29 coordinates ATP; the sequence is GTSMDGVD.

It belongs to the anhydro-N-acetylmuramic acid kinase family.

It carries out the reaction 1,6-anhydro-N-acetyl-beta-muramate + ATP + H2O = N-acetyl-D-muramate 6-phosphate + ADP + H(+). Its pathway is amino-sugar metabolism; 1,6-anhydro-N-acetylmuramate degradation. The protein operates within cell wall biogenesis; peptidoglycan recycling. In terms of biological role, catalyzes the specific phosphorylation of 1,6-anhydro-N-acetylmuramic acid (anhMurNAc) with the simultaneous cleavage of the 1,6-anhydro ring, generating MurNAc-6-P. Is required for the utilization of anhMurNAc either imported from the medium or derived from its own cell wall murein, and thus plays a role in cell wall recycling. In Burkholderia lata (strain ATCC 17760 / DSM 23089 / LMG 22485 / NCIMB 9086 / R18194 / 383), this protein is Anhydro-N-acetylmuramic acid kinase.